A 502-amino-acid polypeptide reads, in one-letter code: Alpha-globin transcription factor CP2 (502 aa).

A Grh/CP2 DB domain is found at 61 to 300; the sequence is ENKILPFQYV…SPGFNSSHSS (240 aa). The DNA-binding stretch occupies residues 133-395; the sequence is EHQQLEGWRW…VRPRLTIYVC (263 aa). Disordered stretches follow at residues 238–268 and 294–325; these read FKPK…YQPS and FNSS…DNLL. Over residues 241 to 265 the composition is skewed to basic and acidic residues; the sequence is KGADRKQKTDREKMEKRTPHEKEKY. Ser-353 is subject to Phosphoserine.

Belongs to the grh/CP2 family. CP2 subfamily. In terms of assembly, binds to DNA as a dimer, isoform 3 does not bind to DNA or affect the binding of isoform 1 to DNA. Interacts with UBP1 and PIAS1, and is probably part of a complex containing TFCP2, UBP1 and PIAS1. Component of the SSP (stage selector protein) complex, which appears to be a heteromer of TFCP2 and 2 copies of NFE4. In terms of tissue distribution, ubiquitous. Expressed in brain, ovary, kidney, thymus, spleen, liver, adrenal, heart and lung (at protein level).

Its subcellular location is the nucleus. Binds a variety of cellular and viral promoters including fibrinogen, alpha-globin, SV40 and HIV-1 promoters. Activation of the alpha-globin promoter in erythroid cells is via synergistic interaction with UBP1. Functions as part of the SSP (stage selector protein) complex. Facilitates the interaction of the gamma-globin genes with enhancer elements contained in the locus control region in fetal erythroid cells. Interacts by binding to the stage selector element (SSE) in the proximal gamma-globin promoter. This is Alpha-globin transcription factor CP2 (TFCP2) from Homo sapiens (Human).